A 93-amino-acid chain; its full sequence is UPF0358 protein ABC2396 (93 aa).

This sequence belongs to the UPF0358 family.

The chain is UPF0358 protein ABC2396 from Shouchella clausii (strain KSM-K16) (Alkalihalobacillus clausii).